Here is a 372-residue protein sequence, read N- to C-terminus: Queuine tRNA-ribosyltransferase (372 aa).

Asp93 (proton acceptor) is an active-site residue. Substrate is bound by residues 93-97 (DSGGF), Asp147, Gln190, and Gly217. An RNA binding region spans residues 248–254 (GVGSPDC). The active-site Nucleophile is Asp267. Positions 272-276 (TRMAR) are RNA binding; important for wobble base 34 recognition. Cys305, Cys307, Cys310, and His336 together coordinate Zn(2+).

The protein belongs to the queuine tRNA-ribosyltransferase family. As to quaternary structure, homodimer. Within each dimer, one monomer is responsible for RNA recognition and catalysis, while the other monomer binds to the replacement base PreQ1. The cofactor is Zn(2+).

The enzyme catalyses 7-aminomethyl-7-carbaguanine + guanosine(34) in tRNA = 7-aminomethyl-7-carbaguanosine(34) in tRNA + guanine. It participates in tRNA modification; tRNA-queuosine biosynthesis. In terms of biological role, catalyzes the base-exchange of a guanine (G) residue with the queuine precursor 7-aminomethyl-7-deazaguanine (PreQ1) at position 34 (anticodon wobble position) in tRNAs with GU(N) anticodons (tRNA-Asp, -Asn, -His and -Tyr). Catalysis occurs through a double-displacement mechanism. The nucleophile active site attacks the C1' of nucleotide 34 to detach the guanine base from the RNA, forming a covalent enzyme-RNA intermediate. The proton acceptor active site deprotonates the incoming PreQ1, allowing a nucleophilic attack on the C1' of the ribose to form the product. After dissociation, two additional enzymatic reactions on the tRNA convert PreQ1 to queuine (Q), resulting in the hypermodified nucleoside queuosine (7-(((4,5-cis-dihydroxy-2-cyclopenten-1-yl)amino)methyl)-7-deazaguanosine). In Desulforudis audaxviator (strain MP104C), this protein is Queuine tRNA-ribosyltransferase.